Here is a 395-residue protein sequence, read N- to C-terminus: Chalcone synthase (395 aa).

Cys-169 is a catalytic residue.

Belongs to the thiolase-like superfamily. Chalcone/stilbene synthases family.

The enzyme catalyses (E)-4-coumaroyl-CoA + 3 malonyl-CoA + 3 H(+) = 2',4,4',6'-tetrahydroxychalcone + 3 CO2 + 4 CoA. Its pathway is secondary metabolite biosynthesis; flavonoid biosynthesis. Its function is as follows. The primary product of this enzyme is 4,2',4',6'-tetrahydroxychalcone (also termed naringenin-chalcone or chalcone) which can under specific conditions spontaneously isomerize into naringenin. The polypeptide is Chalcone synthase (CHS) (Pinus strobus (Eastern white pine)).